We begin with the raw amino-acid sequence, 174 residues long: Rubredoxin-2 (174 aa).

Residues 1-53 (MAKYQCPDCEYIYDEVAGHPHEGFPPGTSWETIPEEWACPDCAVRDKADFVVI) enclose the Rubredoxin-like 1 domain. Fe cation is bound by residues Cys-6, Cys-9, Cys-39, and Cys-42. Residues 56–65 (GSASPASGAA) are compositionally biased toward low complexity. The interval 56-115 (GSASPASGAATPEVRTATTPPKAEASPQKSTGASTPSANNKAKAKAKAKPARAKSSKDST) is disordered. Over residues 97–109 (AKAKAKAKPARAK) the composition is skewed to basic residues. Residues 121–172 (FRKWICITCGHIYDEALGDETEGFAPGTLFEDIPDDWCCPDCGATKEDYVLH) form the Rubredoxin-like 2 domain. Fe cation is bound by residues Cys-126, Cys-129, Cys-159, and Cys-162.

Belongs to the rubredoxin family. Fe(3+) is required as a cofactor.

It is found in the cytoplasm. The protein operates within hydrocarbon metabolism; alkane degradation. Functionally, involved in the hydrocarbon hydroxylating system, which transfers electrons from NADH to rubredoxin reductase and then through rubredoxin to alkane 1 monooxygenase. The sequence is that of Rubredoxin-2 (alkG) from Alcanivorax borkumensis (strain ATCC 700651 / DSM 11573 / NCIMB 13689 / SK2).